Here is a 276-residue protein sequence, read N- to C-terminus: ADP-dependent (S)-NAD(P)H-hydrate dehydratase (276 aa).

The region spanning 7–274 is the YjeF C-terminal domain; the sequence is METLNSINIP…NEIPYAMKQL (268 aa). Ala-42, Gly-105, and His-154 together coordinate (6S)-NADPHX. AMP is bound at residue Gly-216. Asp-217 contributes to the (6S)-NADPHX binding site.

The protein belongs to the NnrD/CARKD family. As to quaternary structure, homotetramer. Requires Mg(2+) as cofactor.

It catalyses the reaction (6S)-NADHX + ADP = AMP + phosphate + NADH + H(+). The enzyme catalyses (6S)-NADPHX + ADP = AMP + phosphate + NADPH + H(+). Catalyzes the dehydration of the S-form of NAD(P)HX at the expense of ADP, which is converted to AMP. Together with NAD(P)HX epimerase, which catalyzes the epimerization of the S- and R-forms, the enzyme allows the repair of both epimers of NAD(P)HX, a damaged form of NAD(P)H that is a result of enzymatic or heat-dependent hydration. The polypeptide is ADP-dependent (S)-NAD(P)H-hydrate dehydratase (Staphylococcus aureus (strain NCTC 8325 / PS 47)).